The chain runs to 421 residues: MHRQSSKSGVALPPVGQGPDACQMLSRAQLGQDPPQRTVLGVLTENEQYRRTCGQEITAIRCFSGSENVFPAAGKKVLSDHGVNEPAKRGFDIYMDDPEQGDRDTCSGKEGIIFEDVYEVDTSMLKSDLHFLLDFNTVSPMLVDPTTHAQSEEATDFGSDVINVTEYAEEIHRYLREAEVRHRPKAHYMRKQPDITEGMRAILVDWLVEVGEEYKLRTETLYLAVNFLDRFLSCMSVLRGKLQLVGTAAILLASKYEEIYPPDVDEFVYITDDTYTKRQLLRMEHLLLKVLAFDLTVPTTNQFLLQYLRRQGVCIRTENLAKYVAELSLLEADPFLKYLPSLVAAAAYCLANYIVNRHFWPETLAAFTGYSLNEIVPCLSELHKACLSIPHRPQQAIREKYKASKYLHVSLMEPPVVLPLQ.

The segment at 1-21 is disordered; sequence MHRQSSKSGVALPPVGQGPDA.

Belongs to the cyclin family. Cyclin AB subfamily. In terms of assembly, interacts with INCA1 and KLHDC9. Interacts with the CDK2 and CDC2 protein kinases to form a serine/threonine kinase holoenzyme complex. The cyclin subunit imparts substrate specificity to the complex. Found in a complex with CDK2, CABLES1 and CCNE1. Polyubiquitinated via 'Lys-11'-linked ubiquitin by the anaphase-promoting complex (APC/C), leading to its degradation by the proteasome. Deubiquitinated and stabilized by USP37 enables entry into S phase. Ubiquitinated during the G1 phase by the SCF(FBXO31) complex, leading to its proteasomal degradation. As to expression, testis and ovaries.

Its subcellular location is the nucleus. It is found in the cytoplasm. It localises to the cytoskeleton. The protein resides in the spindle. Functionally, may be involved in the control of the cell cycle at the G1/S (start) and G2/M (mitosis) transitions. May primarily function in the control of the germline meiotic cell cycle and additionally in the control of mitotic cell cycle in some somatic cells. In Mus musculus (Mouse), this protein is Cyclin-A1 (Ccna1).